The following is a 515-amino-acid chain: AAA ATPase forming ring-shaped complexes (515 aa).

The stretch at 2–49 forms a coiled coil; it reads NDHDEETLASLQQANDQLMAKNHALVKALSRATQEMTKTKAQLNQLAG. Position 240 to 245 (240 to 245) interacts with ATP; it reads GNGKTL.

This sequence belongs to the AAA ATPase family. In terms of assembly, homohexamer. Assembles into a hexameric ring structure.

This is AAA ATPase forming ring-shaped complexes from Bifidobacterium adolescentis (strain ATCC 15703 / DSM 20083 / NCTC 11814 / E194a).